The primary structure comprises 320 residues: Histidine decarboxylase proenzyme (320 aa).

A propeptide spanning residues 2–11 (NKNLEANRNR) is cleaved from the precursor. At Ser98 the chain carries Pyruvic acid (Ser). The Proton donor role is filled by Glu215.

In terms of assembly, the proenzyme is a hexamer of identical pi chains; each pi chain monomer is cleaved to form a small (or beta) chain and a large (or alpha) chain by non-hydrolytic self-catalysis. Pyruvate is required as a cofactor.

It carries out the reaction L-histidine + H(+) = histamine + CO2. The sequence is that of Histidine decarboxylase proenzyme (hdc) from Clostridium perfringens (strain 13 / Type A).